A 230-amino-acid chain; its full sequence is V-type proton ATPase subunit E (230 aa).

This sequence belongs to the V-ATPase E subunit family. In terms of assembly, V-ATPase is a heteromultimeric enzyme composed of a peripheral catalytic V1 complex (components A to H) attached to an integral membrane V0 proton pore complex (components: a, c, c', c'' and d).

Functionally, subunit of the peripheral V1 complex of vacuolar ATPase essential for assembly or catalytic function. V-ATPase is responsible for acidifying a variety of intracellular compartments in eukaryotic cells. The protein is V-type proton ATPase subunit E (VATE) of Citrus unshiu (Satsuma mandarin).